Consider the following 335-residue polypeptide: Biotin synthase (335 aa).

One can recognise a Radical SAM core domain in the interval 41-269; the sequence is KQIQVCKLIS…TSDVRLSAGR (229 aa). Cys-56, Cys-60, and Cys-63 together coordinate [4Fe-4S] cluster. Positions 100, 132, 192, and 264 each coordinate [2Fe-2S] cluster.

It belongs to the radical SAM superfamily. Biotin synthase family. In terms of assembly, homodimer. It depends on [4Fe-4S] cluster as a cofactor. Requires [2Fe-2S] cluster as cofactor.

The enzyme catalyses (4R,5S)-dethiobiotin + (sulfur carrier)-SH + 2 reduced [2Fe-2S]-[ferredoxin] + 2 S-adenosyl-L-methionine = (sulfur carrier)-H + biotin + 2 5'-deoxyadenosine + 2 L-methionine + 2 oxidized [2Fe-2S]-[ferredoxin]. It functions in the pathway cofactor biosynthesis; biotin biosynthesis; biotin from 7,8-diaminononanoate: step 2/2. In terms of biological role, catalyzes the conversion of dethiobiotin (DTB) to biotin by the insertion of a sulfur atom into dethiobiotin via a radical-based mechanism. In Nostoc sp. (strain PCC 7120 / SAG 25.82 / UTEX 2576), this protein is Biotin synthase.